Consider the following 412-residue polypeptide: Putative potassium channel protein RPA4233 (412 aa).

A run of 5 helical transmembrane segments spans residues 35-55 (FIVF…VPAM), 65-85 (ALEL…IWIA), 164-184 (LMAC…AMHI), 202-222 (WWAI…ATGI), and 225-245 (MVAS…VGIV). The Selectivity filter signature appears at 210 to 215 (TIGYGD). 270-388 (LFSHLTAGDI…RKINQIVEGR (119 aa)) contributes to the a nucleoside 3',5'-cyclic phosphate binding site.

Belongs to the potassium channel family.

It localises to the cell membrane. The chain is Putative potassium channel protein RPA4233 from Rhodopseudomonas palustris (strain ATCC BAA-98 / CGA009).